The chain runs to 349 residues: MGSNDPSTPSKASKPPEQEQPPATTSGTTAPVYPEWPGFQGYPAMPPHGFFPPPVAAGQAHPYMWGPQHMVPPYGTPPPPYMMYPPGTVYAHPTAPGVHPFHYPMQTNGNLEPAGAQGAAPGAAETNGKNEPGKTSGPSANGVTSNSESGSDSESEGSDANSQNDSHSKENDVNENGSAQNGVSHSSSHGTFNKPMPLVPVQSGAVIGVAGPATNLNIGMDYWGATGSSPVPAMRGKVPSGSARGEQWDERELKKQKRKLSNRESARRSRLRKQAECEELGQRAEALKSENSSLRIELDRIKKEYEELLSKNTSLKAKLGESGGGGGSDAVPDMNERGDTNGGSHQKEP.

Residues 1-11 (MGSNDPSTPSK) are compositionally biased toward polar residues. Disordered stretches follow at residues 1-39 (MGSN…WPGF), 101-196 (FHYP…NKPM), 224-277 (GATG…QAEC), and 312-349 (NTSL…QKEP). Over residues 113-124 (PAGAQGAAPGAA) the composition is skewed to low complexity. Residues 174–191 (NENGSAQNGVSHSSSHGT) show a composition bias toward polar residues. The bZIP domain occupies 252–315 (ELKKQKRKLS…EELLSKNTSL (64 aa)). Residues 254-273 (KKQKRKLSNRESARRSRLRK) form a basic motif region. The span at 261–277 (SNRESARRSRLRKQAEC) shows a compositional bias: basic and acidic residues. The tract at residues 280-315 (LGQRAEALKSENSSLRIELDRIKKEYEELLSKNTSL) is leucine-zipper. Residues 334-349 (MNERGDTNGGSHQKEP) show a composition bias toward basic and acidic residues.

Belongs to the bZIP family. In terms of assembly, binds DNA as a dimer.

It localises to the nucleus. Binds to the hexamer motif 5'-ACGTCA-3' of histone gene promoters. The chain is Transcription factor HBP-1a from Triticum aestivum (Wheat).